Reading from the N-terminus, the 636-residue chain is Carbon monoxide dehydrogenase 2 (636 aa).

The [4Fe-4S] cluster site is built by Cys39, Cys47, Cys48, Cys51, Cys56, and Cys70. His261, Cys295, Cys333, Cys446, Cys476, and Cys526 together coordinate [Ni-4Fe-5S] cluster.

The protein belongs to the Ni-containing carbon monoxide dehydrogenase family. As to quaternary structure, homodimer. It depends on [4Fe-4S] cluster as a cofactor. [Ni-4Fe-5S] cluster serves as cofactor.

Its subcellular location is the cytoplasm. The protein resides in the cell membrane. It catalyses the reaction CO + 2 oxidized [2Fe-2S]-[ferredoxin] + H2O = 2 reduced [2Fe-2S]-[ferredoxin] + CO2 + 2 H(+). With respect to regulation, inactivated by O(2). Functionally, CODH oxidizes carbon monoxide coupled, via CooF, to the reduction of a hydrogen cation by a hydrogenase (possibly CooH). In Carboxydothermus hydrogenoformans (strain ATCC BAA-161 / DSM 6008 / Z-2901), this protein is Carbon monoxide dehydrogenase 2 (cooS2).